The primary structure comprises 4599 residues: Low-density lipoprotein receptor-related protein 1B (4599 aa).

A signal peptide spans 1 to 20 (MSEFLLALLTLSGLLPIARV). The Extracellular segment spans residues 25–4444 (ADRDQQLCDP…KSDHISTRSI (4420 aa)). 2 consecutive LDL-receptor class A domains span residues 31–70 (LCDP…DTCP) and 76–114 (KCPL…VHCQ). 12 disulfide bridges follow: Cys-32/Cys-45, Cys-39/Cys-58, Cys-52/Cys-69, Cys-77/Cys-90, Cys-84/Cys-103, Cys-97/Cys-113, Cys-120/Cys-129, Cys-125/Cys-138, Cys-140/Cys-153, Cys-159/Cys-169, Cys-165/Cys-178, and Cys-180/Cys-193. The EGF-like 1 domain occupies 116-154 (LLSNCQQLNCQYKCTMVRNSTRCYCEDGFEITEDGRSCK). Asn-134 carries an N-linked (GlcNAc...) asparagine glycan. Residues 155 to 194 (DQDECAVYGTCSQTCRNTHGSYTCSCVEGYLMQPDNRSCK) enclose the EGF-like 2; calcium-binding domain. 4 N-linked (GlcNAc...) asparagine glycosylation sites follow: Asn-190, Asn-220, Asn-313, and Asn-360. LDL-receptor class B repeat units lie at residues 295 to 337 (RNLY…DPIA), 338 to 381 (GKLF…DLVN), and 382 to 425 (KLVY…FEDY). N-linked (GlcNAc...) asparagine glycosylation occurs at Asn-443. The 47-residue stretch at 471-517 (RSHACEVDPYGMPGGCSHICLLSSSYKTRTCRCRTGFNLGSDGRSCK) folds into the EGF-like 3 domain. LDL-receptor class B repeat units follow at residues 568-610 (NYIY…DWIG), 611-656 (NNLY…DPVN), 657-706 (GWMY…DFHT), and 707-750 (NTLY…HGNY). 2 N-linked (GlcNAc...) asparagine glycosylation sites follow: Asn-725 and Asn-758. The EGF-like 4 domain maps to 794–834 (GDNMCRVNNGGCSTLCLAIPGGRVCACADNQLLDENGTTCT). Cystine bridges form between Cys-798–Cys-809, Cys-805–Cys-818, Cys-820–Cys-833, Cys-845–Cys-857, Cys-852–Cys-870, and Cys-864–Cys-881. Asn-829 carries an N-linked (GlcNAc...) asparagine glycan. Residues 844-882 (ICKAGEFRCKNRHCIQARWKCDGDDDCLDGSDEDSVNCF) enclose the LDL-receptor class A 3 domain. N-linked (GlcNAc...) asparagine glycosylation is present at Asn-883. 7 consecutive LDL-receptor class A domains span residues 885 to 923 (SCPD…QTCT), 926 to 963 (TCQV…ASCE), 966 to 1003 (TCEP…VGCV), 1005 to 1043 (SCFD…INCT), 1052 to 1089 (GCNG…KGCN), 1094 to 1132 (LCDH…DDCD), and 1135 to 1174 (LCGP…YLCD). 15 disulfide bridges follow: Cys-886–Cys-898, Cys-893–Cys-911, Cys-905–Cys-922, Cys-927–Cys-939, Cys-934–Cys-952, Cys-946–Cys-962, Cys-967–Cys-980, Cys-975–Cys-993, Cys-987–Cys-1002, Cys-1006–Cys-1018, Cys-1013–Cys-1031, Cys-1025–Cys-1042, Cys-1053–Cys-1066, Cys-1060–Cys-1079, and Cys-1073–Cys-1088. An N-linked (GlcNAc...) asparagine glycan is attached at Asn-919. N-linked (GlcNAc...) asparagine glycosylation is present at Asn-1041. Asn-1089 carries N-linked (GlcNAc...) asparagine glycosylation. Intrachain disulfides connect Cys-1095–Cys-1109, Cys-1103–Cys-1122, Cys-1116–Cys-1131, Cys-1136–Cys-1150, Cys-1143–Cys-1163, and Cys-1157–Cys-1173. An N-linked (GlcNAc...) asparagine glycan is attached at Asn-1145. EGF-like domains follow at residues 1174-1213 (DECS…KTCE) and 1214-1253 (IVDY…ESCT). N-linked (GlcNAc...) asparagine glycosylation is present at Asn-1209. The N-linked (GlcNAc...) asparagine glycan is linked to Asn-1298. LDL-receptor class B repeat units lie at residues 1300–1346 (SLLY…DWIA), 1347–1389 (GNIY…DPRY), 1390–1436 (GILF…DHFE), 1437–1480 (KRIV…LYGS), and 1481–1522 (EVYW…YHPS). N-linked (GlcNAc...) asparagine glycosylation is found at Asn-1502, Asn-1549, and Asn-1636. Residues 1527–1570 (APNPCAANDGKGPCSHMCLINHNRSAACACPHLMKLSSDKKTCY) form the EGF-like 7 domain. 4 LDL-receptor class B repeats span residues 1618-1660 (ERLY…DWVS), 1661-1704 (RNLY…HPVR), 1705-1744 (GKLY…DYVE), and 1745-1787 (NKLY…TIMD). N-linked (GlcNAc...) asparagine glycans are attached at residues Asn-1754 and Asn-1816. The 42-residue stretch at 1834 to 1875 (GSNSCQLNNGGCSQLCLPTSETTRTCMCTVGYYLQKNRMSCQ) folds into the EGF-like 8 domain. Cystine bridges form between Cys-1838–Cys-1849, Cys-1845–Cys-1859, and Cys-1861–Cys-1874. N-linked (GlcNAc...) asparagine glycosylation is present at Asn-1921. LDL-receptor class B repeat units follow at residues 1922–1964 (DTIY…DWIA), 1965–2007 (GNIY…HPEK), 2008–2051 (GLLF…DYEE), and 2052–2095 (NKLY…FGAY). The N-linked (GlcNAc...) asparagine glycan is linked to Asn-1983. Asn-2105 is a glycosylation site (N-linked (GlcNAc...) asparagine). One can recognise an EGF-like 9 domain in the interval 2143-2183 (GTNVCARDNGGCKQLCLYRGNSRRTCACAHGYLAEDGVTCL). Disulfide bonds link Cys-2147-Cys-2158, Cys-2154-Cys-2168, and Cys-2170-Cys-2182. LDL-receptor class B repeat units lie at residues 2239–2280 (NRIF…HRAW), 2281–2329 (DTLY…DECQ), 2330–2374 (NLMF…DYRA), 2375–2416 (EKLY…VYDN), and 2417–2459 (YIFW…VAND). N-linked (GlcNAc...) asparagine glycans are attached at residues Asn-2458, Asn-2488, and Asn-2507. An EGF-like 10 domain is found at 2464 to 2504 (ELSPCALLNGGCHDLCLLTPNGRVNCSCRGDRILLEDNRCV). The LDL-receptor class A 11 domain maps to 2509–2548 (SCNAYSEFECGNGECIDYQLTCDGIPHCKDKSDEKLLYCE). Intrachain disulfides connect Cys-2510/Cys-2523, Cys-2518/Cys-2536, and Cys-2530/Cys-2547. Asn-2549 carries an N-linked (GlcNAc...) asparagine glycan. LDL-receptor class A domains follow at residues 2551-2587 (SCRR…LDCK), 2590-2626 (TCAT…KNCN), 2629-2675 (DCTH…LKCP), 2681-2717 (KCEE…FHCD), 2719-2757 (SCSW…SICG), and 2760-2800 (TCAA…AGCA). Intrachain disulfides connect Cys-2552–Cys-2564, Cys-2559–Cys-2577, Cys-2571–Cys-2586, Cys-2591–Cys-2603, Cys-2598–Cys-2616, and Cys-2610–Cys-2625. N-linked (GlcNAc...) asparagine glycosylation is found at Asn-2626 and Asn-2647. Disulfide bonds link Cys-2630–Cys-2652, Cys-2646–Cys-2665, Cys-2659–Cys-2674, Cys-2682–Cys-2694, Cys-2689–Cys-2707, Cys-2701–Cys-2716, Cys-2720–Cys-2732, Cys-2727–Cys-2745, Cys-2739–Cys-2756, Cys-2761–Cys-2774, Cys-2768–Cys-2787, and Cys-2781–Cys-2799. A glycan (N-linked (GlcNAc...) asparagine) is linked at Asn-2802. LDL-receptor class A domains lie at 2804–2841 (TCDE…PQCG), 2844–2885 (QCGT…PKCK), and 2890–2926 (SCNS…RNCH). 15 cysteine pairs are disulfide-bonded: Cys-2805–Cys-2817, Cys-2812–Cys-2830, Cys-2824–Cys-2840, Cys-2845–Cys-2857, Cys-2852–Cys-2871, Cys-2865–Cys-2884, Cys-2891–Cys-2903, Cys-2898–Cys-2916, Cys-2910–Cys-2925, Cys-2930–Cys-2942, Cys-2938–Cys-2951, Cys-2953–Cys-2966, Cys-2972–Cys-2982, Cys-2978–Cys-2991, and Cys-2993–Cys-3007. An N-linked (GlcNAc...) asparagine glycan is attached at Asn-2892. Positions 2927–2967 (INECLSKKVSGCSQDCQDLPVSYKCKCWPGFQLKDDGKTCV) constitute an EGF-like 11 domain. Positions 2968 to 3008 (DIDECSSGFPCSQQCINTYGTYKCLCTDGYEIQPDNPNGCK) constitute an EGF-like 12; calcium-binding domain. Residues Asn-3034, Asn-3066, and Asn-3076 are each glycosylated (N-linked (GlcNAc...) asparagine). 5 LDL-receptor class B repeats span residues 3055–3098 (EFIY…DWIG), 3099–3141 (KNLY…DPQA), 3142–3185 (GYLY…DYVN), 3186–3224 (RRLY…TLFE), and 3225–3268 (DYIY…HSYR). An N-linked (GlcNAc...) asparagine glycan is attached at Asn-3164. An EGF-like 13 domain is found at 3273–3314 (SKHLCMINNGGCSHLCLLAPGKTHTCACPTNFYLAADNRTCL). Residues Asn-3310 and Asn-3316 are each glycosylated (N-linked (GlcNAc...) asparagine). LDL-receptor class A domains are found at residues 3316-3353 (NCTA…DDCP), 3356-3392 (RCQP…LNCD), 3395-3432 (VCLS…RDCP), 3435-3472 (SCSP…ANCD), 3475-3511 (TCGP…ENCK), 3514-3550 (TCTL…RNCE), 3552-3588 (SCSK…KSCE), 3593-3629 (TCSS…MDCV), 3631-3668 (ECKE…ENCE), 3673-3711 (ICRA…DMCV), 3714-3752 (LCPS…DHCG), and 3761-3797 (PCKK…QGCR). Disulfide bonds link Cys-3317–Cys-3329, Cys-3324–Cys-3342, Cys-3336–Cys-3352, Cys-3357–Cys-3369, Cys-3364–Cys-3382, Cys-3376–Cys-3391, Cys-3396–Cys-3409, Cys-3403–Cys-3422, Cys-3416–Cys-3431, Cys-3436–Cys-3449, Cys-3443–Cys-3462, Cys-3456–Cys-3471, Cys-3476–Cys-3488, Cys-3483–Cys-3501, Cys-3495–Cys-3510, Cys-3515–Cys-3527, Cys-3522–Cys-3540, Cys-3534–Cys-3549, Cys-3553–Cys-3565, Cys-3560–Cys-3578, Cys-3572–Cys-3587, Cys-3594–Cys-3606, Cys-3601–Cys-3619, Cys-3613–Cys-3628, Cys-3632–Cys-3645, Cys-3639–Cys-3658, Cys-3652–Cys-3667, Cys-3674–Cys-3686, Cys-3681–Cys-3699, Cys-3693–Cys-3710, Cys-3715–Cys-3729, Cys-3723–Cys-3742, Cys-3736–Cys-3751, Cys-3762–Cys-3774, Cys-3769–Cys-3787, Cys-3781–Cys-3796, Cys-3805–Cys-3818, Cys-3812–Cys-3827, Cys-3829–Cys-3842, Cys-3848–Cys-3858, Cys-3854–Cys-3867, and Cys-3869–Cys-3880. N-linked (GlcNAc...) asparagine glycosylation occurs at Asn-3682. EGF-like domains are found at residues 3801-3843 (TEYT…RQCE) and 3844-3881 (DLNE…NTCI). 3 N-linked (GlcNAc...) asparagine glycosylation sites follow: Asn-3877, Asn-3894, and Asn-3906. LDL-receptor class B repeat units lie at residues 3933 to 3980 (DMII…DWVA), 3981 to 4038 (GNIY…NPKR), 4039 to 4082 (GMMY…DYFS), and 4083 to 4127 (ERIY…FEDY). A glycan (N-linked (GlcNAc...) asparagine) is linked at Asn-4017. EGF-like domains are found at residues 4171 to 4208 (DLPN…GTCN), 4213 to 4249 (LDDS…ERCE), 4249 to 4285 (EVNH…PNCG), 4285 to 4321 (GKTV…DRCQ), 4321 to 4357 (QYYV…PKCE), 4357 to 4392 (EVDK…SSCQ), and 4390 to 4427 (SCQL…TQCE). An N-linked (GlcNAc...) asparagine glycan is attached at Asn-4204. 11 disulfide bridges follow: Cys-4217/Cys-4227, Cys-4221/Cys-4237, Cys-4253/Cys-4263, Cys-4257/Cys-4273, Cys-4275/Cys-4284, Cys-4289/Cys-4299, Cys-4293/Cys-4309, Cys-4311/Cys-4320, Cys-4325/Cys-4335, Cys-4329/Cys-4345, and Cys-4347/Cys-4356. Residue Asn-4381 is glycosylated (N-linked (GlcNAc...) asparagine). 3 disulfides stabilise this stretch: Cys-4394-Cys-4404, Cys-4398-Cys-4415, and Cys-4417-Cys-4426. The N-linked (GlcNAc...) asparagine glycan is linked to Asn-4420. A helical membrane pass occupies residues 4445-4467 (AIIVPLVLLVTLITTLVIGLVLC). The Cytoplasmic portion of the chain corresponds to 4468–4599 (KRKRRTKTIR…IEIGIRETVA (132 aa)). Short sequence motifs (endocytosis signal) lie at residues 4492-4495 (NPSY) and 4559-4562 (NPVY).

It belongs to the LDLR family. Binds LRPAP1, PLAU, PLAT and SERPINE1; binding is followed by internalization and degradation of the ligands. Expressed in thyroid gland and in salivary gland, as well as in adult and fetal brain.

The protein resides in the membrane. Potential cell surface proteins that bind and internalize ligands in the process of receptor-mediated endocytosis. This is Low-density lipoprotein receptor-related protein 1B (LRP1B) from Homo sapiens (Human).